A 493-amino-acid chain; its full sequence is Ketol-acid reductoisomerase (NADP(+)) (493 aa).

Positions 17–208 (LGKCRFMKRE…GGDRAGVLES (192 aa)) constitute a KARI N-terminal Rossmann domain. Residues 45 to 48 (CGAQ), R68, R76, S78, and 108 to 110 (DKQ) each bind NADP(+). The active site involves H132. G158 provides a ligand contact to NADP(+). KARI C-terminal knotted domains lie at 209-353 (SFIA…SEQE) and 354-486 (YYDK…MTDM). 4 residues coordinate Mg(2+): D217, E221, E389, and E393. S414 serves as a coordination point for substrate.

Belongs to the ketol-acid reductoisomerase family. Mg(2+) serves as cofactor.

It carries out the reaction (2R)-2,3-dihydroxy-3-methylbutanoate + NADP(+) = (2S)-2-acetolactate + NADPH + H(+). It catalyses the reaction (2R,3R)-2,3-dihydroxy-3-methylpentanoate + NADP(+) = (S)-2-ethyl-2-hydroxy-3-oxobutanoate + NADPH + H(+). It functions in the pathway amino-acid biosynthesis; L-isoleucine biosynthesis; L-isoleucine from 2-oxobutanoate: step 2/4. The protein operates within amino-acid biosynthesis; L-valine biosynthesis; L-valine from pyruvate: step 2/4. Involved in the biosynthesis of branched-chain amino acids (BCAA). Catalyzes an alkyl-migration followed by a ketol-acid reduction of (S)-2-acetolactate (S2AL) to yield (R)-2,3-dihydroxy-isovalerate. In the isomerase reaction, S2AL is rearranged via a Mg-dependent methyl migration to produce 3-hydroxy-3-methyl-2-ketobutyrate (HMKB). In the reductase reaction, this 2-ketoacid undergoes a metal-dependent reduction by NADPH to yield (R)-2,3-dihydroxy-isovalerate. In Colwellia psychrerythraea (strain 34H / ATCC BAA-681) (Vibrio psychroerythus), this protein is Ketol-acid reductoisomerase (NADP(+)).